Consider the following 362-residue polypeptide: Chorismate synthase (362 aa).

Arg46 serves as a coordination point for NADP(+). Residues 122 to 124 (RSS), 238 to 239 (NA), Gly278, 293 to 297 (KPTPS), and Arg319 each bind FMN.

This sequence belongs to the chorismate synthase family. As to quaternary structure, homotetramer. The cofactor is FMNH2.

It carries out the reaction 5-O-(1-carboxyvinyl)-3-phosphoshikimate = chorismate + phosphate. The protein operates within metabolic intermediate biosynthesis; chorismate biosynthesis; chorismate from D-erythrose 4-phosphate and phosphoenolpyruvate: step 7/7. Functionally, catalyzes the anti-1,4-elimination of the C-3 phosphate and the C-6 proR hydrogen from 5-enolpyruvylshikimate-3-phosphate (EPSP) to yield chorismate, which is the branch point compound that serves as the starting substrate for the three terminal pathways of aromatic amino acid biosynthesis. This reaction introduces a second double bond into the aromatic ring system. In Campylobacter jejuni subsp. jejuni serotype O:6 (strain 81116 / NCTC 11828), this protein is Chorismate synthase.